A 321-amino-acid polypeptide reads, in one-letter code: DNA repair and recombination protein RadA (321 aa).

Residue 111–118 (GEFGSGKT) coordinates ATP.

The protein belongs to the eukaryotic RecA-like protein family.

In terms of biological role, involved in DNA repair and in homologous recombination. Binds and assemble on single-stranded DNA to form a nucleoprotein filament. Hydrolyzes ATP in a ssDNA-dependent manner and promotes DNA strand exchange between homologous DNA molecules. The protein is DNA repair and recombination protein RadA of Sulfolobus acidocaldarius (strain ATCC 33909 / DSM 639 / JCM 8929 / NBRC 15157 / NCIMB 11770).